Here is an 84-residue protein sequence, read N- to C-terminus: MSRIRRMRDLDSNPCLEETDASTKCMDENQYQKDLCTSYFIKYKNCRKFWNGIMITRRREGTVPYMPAAEERKQILESLESLPY.

The region spanning 12-54 (SNPCLEETDASTKCMDENQYQKDLCTSYFIKYKNCRKFWNGIM) is the CHCH domain. 2 short sequence motifs (cx9C motif) span residues 15–25 (CLEETDASTKC) and 36–46 (CTSYFIKYKNC). 2 disulfide bridges follow: Cys-15–Cys-46 and Cys-25–Cys-36.

This sequence belongs to the CHCHD7 family.

The protein localises to the mitochondrion intermembrane space. The polypeptide is Coiled-coil-helix-coiled-coil-helix domain-containing protein 7 (chchd7) (Xenopus laevis (African clawed frog)).